The sequence spans 266 residues: Glutamate racemase (266 aa).

Residues 9–10 (DS) and 41–42 (YG) each bind substrate. The active-site Proton donor/acceptor is Cys72. Position 73 to 74 (73 to 74 (NT)) interacts with substrate. Cys184 acts as the Proton donor/acceptor in catalysis. 185–186 (TH) provides a ligand contact to substrate.

This sequence belongs to the aspartate/glutamate racemases family.

The enzyme catalyses L-glutamate = D-glutamate. It participates in cell wall biogenesis; peptidoglycan biosynthesis. Provides the (R)-glutamate required for cell wall biosynthesis. The protein is Glutamate racemase of Staphylococcus carnosus (strain TM300).